Consider the following 152-residue polypeptide: Succinate dehydrogenase [ubiquinone] cytochrome b small subunit B, mitochondrial (152 aa).

The transit peptide at 1 to 21 directs the protein to the mitochondrion; it reads MATLLRVSSLCRANRASAFKS. At 22-56 the chain is on the mitochondrial matrix side; sequence LLIRPLPCLSQDLHMVQTSQIHTSPNHHAGSKAAS. The chain crosses the membrane as a helical span at residues 57-78; it reads MHWTGERALSVALLGLLPAAYL. Topologically, residues 79–83 are mitochondrial intermembrane; that stretch reads YPGAA. A helical membrane pass occupies residues 84–104; that stretch reads MDYSLAAALTLHGHWGLGQVV. Histidine 95 serves as a coordination point for heme b. Residues 105–113 are Mitochondrial matrix-facing; that stretch reads TDYVHGETK. A ubiquinone is bound at residue tyrosine 107. The chain crosses the membrane as a helical span at residues 114–135; sequence IKMANTSLFALSALTFAGLCYF. Over 136 to 152 the chain is Mitochondrial intermembrane; it reads NYHDVGICKAVAMLWSL.

The protein belongs to the CybS family. As to quaternary structure, component of complex II composed of four subunits: the flavoprotein (FP) SDHA, iron-sulfur protein (IP) SDHB, and a cytochrome b560 composed of SDHC and SDHD.

It is found in the mitochondrion inner membrane. It participates in carbohydrate metabolism; tricarboxylic acid cycle. Functionally, membrane-anchoring subunit of succinate dehydrogenase (SDH) that is involved in complex II of the mitochondrial electron transport chain and is responsible for transferring electrons from succinate to ubiquinone (coenzyme Q). SDH also oxidizes malate to the non-canonical enol form of oxaloacetate, enol-oxaloacetate. Enol-oxaloacetate, which is a potent inhibitor of the succinate dehydrogenase activity, is further isomerized into keto-oxaloacetate. The polypeptide is Succinate dehydrogenase [ubiquinone] cytochrome b small subunit B, mitochondrial (sdhd-b) (Xenopus laevis (African clawed frog)).